The primary structure comprises 194 residues: Dephospho-CoA kinase (194 aa).

The DPCK domain occupies 3 to 194 (TIGLTGGIGS…EQVDGFWGGL (192 aa)). Position 11 to 16 (11 to 16 (GSGKST)) interacts with ATP.

This sequence belongs to the CoaE family.

Its subcellular location is the cytoplasm. The catalysed reaction is 3'-dephospho-CoA + ATP = ADP + CoA + H(+). The protein operates within cofactor biosynthesis; coenzyme A biosynthesis; CoA from (R)-pantothenate: step 5/5. Its function is as follows. Catalyzes the phosphorylation of the 3'-hydroxyl group of dephosphocoenzyme A to form coenzyme A. In Corynebacterium jeikeium (strain K411), this protein is Dephospho-CoA kinase.